Consider the following 235-residue polypeptide: Small ribosomal subunit protein eS4 (235 aa).

An S4 RNA-binding domain is found at 37–110; sequence LPLGLIIRDV…KGRLVLYKLN (74 aa).

Belongs to the eukaryotic ribosomal protein eS4 family.

This chain is Small ribosomal subunit protein eS4, found in Methanosarcina mazei (strain ATCC BAA-159 / DSM 3647 / Goe1 / Go1 / JCM 11833 / OCM 88) (Methanosarcina frisia).